A 268-amino-acid polypeptide reads, in one-letter code: Putative hydro-lyase ACICU_01268 (268 aa).

This sequence belongs to the D-glutamate cyclase family.

This chain is Putative hydro-lyase ACICU_01268, found in Acinetobacter baumannii (strain ACICU).